The chain runs to 196 residues: Peptide deformylase (196 aa).

Fe cation contacts are provided by cysteine 97 and histidine 139. The active site involves glutamate 140. Position 143 (histidine 143) interacts with Fe cation. Residues 171–187 (LDAQEPKRAPHSPHTDA) are compositionally biased toward basic and acidic residues. The disordered stretch occupies residues 171 to 196 (LDAQEPKRAPHSPHTDAQKPGAASDL).

The protein belongs to the polypeptide deformylase family. It depends on Fe(2+) as a cofactor.

The catalysed reaction is N-terminal N-formyl-L-methionyl-[peptide] + H2O = N-terminal L-methionyl-[peptide] + formate. Its function is as follows. Removes the formyl group from the N-terminal Met of newly synthesized proteins. Requires at least a dipeptide for an efficient rate of reaction. N-terminal L-methionine is a prerequisite for activity but the enzyme has broad specificity at other positions. This is Peptide deformylase from Methylocella silvestris (strain DSM 15510 / CIP 108128 / LMG 27833 / NCIMB 13906 / BL2).